The following is a 209-amino-acid chain: FMN-dependent NADH:quinone oxidoreductase (209 aa).

FMN is bound by residues S18, 102 to 105 (MYNF), and 146 to 149 (SRGG).

This sequence belongs to the azoreductase type 1 family. In terms of assembly, homodimer. Requires FMN as cofactor.

It carries out the reaction 2 a quinone + NADH + H(+) = 2 a 1,4-benzosemiquinone + NAD(+). The catalysed reaction is N,N-dimethyl-1,4-phenylenediamine + anthranilate + 2 NAD(+) = 2-(4-dimethylaminophenyl)diazenylbenzoate + 2 NADH + 2 H(+). Its function is as follows. Quinone reductase that provides resistance to thiol-specific stress caused by electrophilic quinones. In terms of biological role, also exhibits azoreductase activity. Catalyzes the reductive cleavage of the azo bond in aromatic azo compounds to the corresponding amines. This is FMN-dependent NADH:quinone oxidoreductase from Saccharophagus degradans (strain 2-40 / ATCC 43961 / DSM 17024).